The primary structure comprises 482 residues: Adenylyltransferase and sulfurtransferase uba4 (482 aa).

The disordered stretch occupies residues 33–57 (EGAALRAQSQKTASANATTGQRTKS). Positions 39–54 (AQSQKTASANATTGQR) are enriched in polar residues. ATP is bound by residues glycine 98, aspartate 119, 126 to 130 (SNLHR), lysine 143, and 187 to 188 (DN). Positions 236 and 239 each coordinate Zn(2+). The active-site Glycyl thioester intermediate; for adenylyltransferase activity is the cysteine 253. Zn(2+) is bound by residues cysteine 315 and cysteine 318. The Rhodanese domain occupies 366-480 (AGAQRHIIDV…WREQVDPDWP (115 aa)). The active-site Cysteine persulfide intermediate; for sulfurtransferase activity is the cysteine 435.

The protein in the N-terminal section; belongs to the HesA/MoeB/ThiF family. UBA4 subfamily. Zn(2+) serves as cofactor.

The protein resides in the cytoplasm. The protein localises to the cytosol. The enzyme catalyses [molybdopterin-synthase sulfur-carrier protein]-C-terminal Gly-Gly + ATP + H(+) = [molybdopterin-synthase sulfur-carrier protein]-C-terminal Gly-Gly-AMP + diphosphate. It catalyses the reaction [molybdopterin-synthase sulfur-carrier protein]-C-terminal Gly-Gly-AMP + S-sulfanyl-L-cysteinyl-[cysteine desulfurase] + AH2 = [molybdopterin-synthase sulfur-carrier protein]-C-terminal-Gly-aminoethanethioate + L-cysteinyl-[cysteine desulfurase] + A + AMP + 2 H(+). It participates in tRNA modification; 5-methoxycarbonylmethyl-2-thiouridine-tRNA biosynthesis. The protein operates within cofactor biosynthesis; molybdopterin biosynthesis. Functionally, plays a central role in 2-thiolation of mcm(5)S(2)U at tRNA wobble positions of cytosolic tRNA(Lys), tRNA(Glu) and tRNA(Gln). Also essential during biosynthesis of the molybdenum cofactor. Acts by mediating the C-terminal thiocarboxylation of sulfur carriers urm1 and mocs2a. Its N-terminus first activates urm1 and mocs2a as acyl-adenylates (-COAMP), then the persulfide sulfur on the catalytic cysteine is transferred to urm1 and mocs2a to form thiocarboxylation (-COSH) of their C-terminus. The reaction probably involves hydrogen sulfide that is generated from the persulfide intermediate and that acts as a nucleophile towards urm1 and mocs2a. Subsequently, a transient disulfide bond is formed. Does not use thiosulfate as sulfur donor; nfs1 probably acting as a sulfur donor for thiocarboxylation reactions. The protein is Adenylyltransferase and sulfurtransferase uba4 of Emericella nidulans (strain FGSC A4 / ATCC 38163 / CBS 112.46 / NRRL 194 / M139) (Aspergillus nidulans).